A 293-amino-acid polypeptide reads, in one-letter code: Pyridoxal 5'-phosphate synthase subunit PdxS (293 aa).

Position 23 (Asp-23) interacts with D-ribose 5-phosphate. The active-site Schiff-base intermediate with D-ribose 5-phosphate is the Lys-80. Gly-152 contacts D-ribose 5-phosphate. Position 164 (Arg-164) interacts with D-glyceraldehyde 3-phosphate. Residues Gly-213 and 234–235 contribute to the D-ribose 5-phosphate site; that span reads GS.

The protein belongs to the PdxS/SNZ family. As to quaternary structure, in the presence of PdxT, forms a dodecamer of heterodimers.

It carries out the reaction aldehydo-D-ribose 5-phosphate + D-glyceraldehyde 3-phosphate + L-glutamine = pyridoxal 5'-phosphate + L-glutamate + phosphate + 3 H2O + H(+). Its pathway is cofactor biosynthesis; pyridoxal 5'-phosphate biosynthesis. Functionally, catalyzes the formation of pyridoxal 5'-phosphate from ribose 5-phosphate (RBP), glyceraldehyde 3-phosphate (G3P) and ammonia. The ammonia is provided by the PdxT subunit. Can also use ribulose 5-phosphate and dihydroxyacetone phosphate as substrates, resulting from enzyme-catalyzed isomerization of RBP and G3P, respectively. The protein is Pyridoxal 5'-phosphate synthase subunit PdxS of Chloroflexus aggregans (strain MD-66 / DSM 9485).